A 185-amino-acid polypeptide reads, in one-letter code: UPF0301 protein Shew_1144 (185 aa).

Belongs to the UPF0301 (AlgH) family.

In Shewanella loihica (strain ATCC BAA-1088 / PV-4), this protein is UPF0301 protein Shew_1144.